A 754-amino-acid polypeptide reads, in one-letter code: Condensin complex subunit 2 (754 aa).

Positions 104–149 (LAQRKTNGASNGDDSNGGNGEGLGGDSDEANIEIDPLTGMPISNDP) are disordered. Residues 118-128 (SNGGNGEGLGG) show a composition bias toward gly residues. Serine 245 carries the post-translational modification Phosphoserine. The disordered stretch occupies residues 359-379 (CYPDENHDNTSHDEQDDDNVN). Positions 362-371 (DENHDNTSHD) are enriched in basic and acidic residues. The residue at position 548 (serine 548) is a Phosphoserine. The disordered stretch occupies residues 665–688 (HDSRKNREQSSNDSETHTEDESTK).

This sequence belongs to the CND2 (condensin subunit 2) family. Component of the condensin complex, which contains the SMC2 and SMC4 heterodimer, and three non SMC subunits that probably regulate the complex: BRN1, YCS4 and YCG1/YCS5.

The protein resides in the nucleus. Its subcellular location is the cytoplasm. The protein localises to the chromosome. In terms of biological role, regulatory subunit of the condensin complex, a complex required for conversion of interphase chromatin into mitotic-like condense chromosomes. The condensin complex probably introduces positive supercoils into relaxed DNA in the presence of type I topoisomerases and converts nicked DNA into positive knotted forms in the presence of type II topoisomerases. The condensin complex probably also plays a role during interphase. In Saccharomyces cerevisiae (strain ATCC 204508 / S288c) (Baker's yeast), this protein is Condensin complex subunit 2 (BRN1).